The following is a 563-amino-acid chain: Arginine--tRNA ligase (563 aa).

A 'HIGH' region motif is present at residues Pro121 to His131.

It belongs to the class-I aminoacyl-tRNA synthetase family. As to quaternary structure, monomer.

Its subcellular location is the cytoplasm. The catalysed reaction is tRNA(Arg) + L-arginine + ATP = L-arginyl-tRNA(Arg) + AMP + diphosphate. This is Arginine--tRNA ligase from Streptococcus pyogenes serotype M49 (strain NZ131).